Reading from the N-terminus, the 159-residue chain is Small ribosomal subunit protein uS7 (159 aa).

This sequence belongs to the universal ribosomal protein uS7 family. Part of the 30S ribosomal subunit. Contacts proteins S9 and S11.

Functionally, one of the primary rRNA binding proteins, it binds directly to 16S rRNA where it nucleates assembly of the head domain of the 30S subunit. Is located at the subunit interface close to the decoding center, probably blocks exit of the E-site tRNA. The protein is Small ribosomal subunit protein uS7 of Elusimicrobium minutum (strain Pei191).